Reading from the N-terminus, the 427-residue chain is UDP-N-acetylglucosamine 1-carboxyvinyltransferase 1 (427 aa).

24–25 (KN) is a binding site for phosphoenolpyruvate. Position 97 (Arg-97) interacts with UDP-N-acetyl-alpha-D-glucosamine. Residue Cys-121 is the Proton donor of the active site. The residue at position 121 (Cys-121) is a 2-(S-cysteinyl)pyruvic acid O-phosphothioketal. UDP-N-acetyl-alpha-D-glucosamine contacts are provided by residues 126–130 (RPIDL), Asp-309, and Val-331.

Belongs to the EPSP synthase family. MurA subfamily.

It is found in the cytoplasm. It carries out the reaction phosphoenolpyruvate + UDP-N-acetyl-alpha-D-glucosamine = UDP-N-acetyl-3-O-(1-carboxyvinyl)-alpha-D-glucosamine + phosphate. It functions in the pathway cell wall biogenesis; peptidoglycan biosynthesis. In terms of biological role, cell wall formation. Adds enolpyruvyl to UDP-N-acetylglucosamine. This Lactococcus lactis subsp. lactis (strain IL1403) (Streptococcus lactis) protein is UDP-N-acetylglucosamine 1-carboxyvinyltransferase 1.